The following is a 360-amino-acid chain: Phosphoserine aminotransferase (360 aa).

R43 serves as a coordination point for L-glutamate. Residues 77–78, W103, T152, D172, and Q195 each bind pyridoxal 5'-phosphate; that span reads AS. K196 carries the N6-(pyridoxal phosphate)lysine modification. 237-238 contacts pyridoxal 5'-phosphate; sequence NT.

Belongs to the class-V pyridoxal-phosphate-dependent aminotransferase family. SerC subfamily. In terms of assembly, homodimer. Pyridoxal 5'-phosphate serves as cofactor.

The protein localises to the cytoplasm. The catalysed reaction is O-phospho-L-serine + 2-oxoglutarate = 3-phosphooxypyruvate + L-glutamate. It catalyses the reaction 4-(phosphooxy)-L-threonine + 2-oxoglutarate = (R)-3-hydroxy-2-oxo-4-phosphooxybutanoate + L-glutamate. The protein operates within amino-acid biosynthesis; L-serine biosynthesis; L-serine from 3-phospho-D-glycerate: step 2/3. It participates in cofactor biosynthesis; pyridoxine 5'-phosphate biosynthesis; pyridoxine 5'-phosphate from D-erythrose 4-phosphate: step 3/5. Functionally, catalyzes the reversible conversion of 3-phosphohydroxypyruvate to phosphoserine and of 3-hydroxy-2-oxo-4-phosphonooxybutanoate to phosphohydroxythreonine. This chain is Phosphoserine aminotransferase, found in Syntrophobacter fumaroxidans (strain DSM 10017 / MPOB).